A 252-amino-acid polypeptide reads, in one-letter code: Probable transcriptional regulatory protein Caur_1043 (252 aa).

Over residues 1–14 (MSGHSKWHTIRRTK) the composition is skewed to basic residues. A disordered region spans residues 1 to 22 (MSGHSKWHTIRRTKGVNDQRRG).

The protein belongs to the TACO1 family.

The protein localises to the cytoplasm. The polypeptide is Probable transcriptional regulatory protein Caur_1043 (Chloroflexus aurantiacus (strain ATCC 29366 / DSM 635 / J-10-fl)).